Consider the following 1052-residue polypeptide: Mitotic checkpoint serine/threonine-protein kinase BUB1 beta (1052 aa).

Residues 56–219 (FESEIRFYSG…LEPSEPQRSS (164 aa)) form the BUB1 N-terminal domain. Positions 105-112 (GETRYYND) match the Nuclear localization signal motif. The necessary for interaction with KNL1 stretch occupies residues 146-179 (AQFYISWAEEYEARENFKKADIIFQEGIERKAEP). Disordered regions lie at residues 206–256 (EEEA…NAVP) and 272–327 (ADTA…TSIP). Positions 217–225 (RSSLAELKS) match the D-box motif. At Lys243 the chain carries N6-acetyllysine; by PCAF. Phosphoserine is present on Ser360. The tract at residues 361 to 381 (TRKPGREEGDPLQRVQSHQQG) is disordered. Ser428 is modified (phosphoserine). The interval 496 to 552 (SNPREISPAENILQEQPDSKGSSMPFSIFDESLSDKKDKSPATGGPQVLNAQRRPLS) is disordered. Polar residues predominate over residues 508 to 520 (LQEQPDSKGSSMP). 2 positions are modified to phosphoserine: Ser535 and Ser659. Residue Ser665 is modified to Phosphoserine; by PLK1. Ser686 is modified (phosphoserine). Residues 756–1040 (VIKQEHLTCD…TISPEALLTQ (285 aa)) form the Protein kinase domain. Residue 762–770 (LTCDDYRLF) coordinates ATP. Thr781 is subject to Phosphothreonine; by PLK1. ATP is bound at residue Lys784. Asp871 serves as the catalytic Proton acceptor. Thr998 carries the phosphothreonine; by PLK1 modification. 2 positions are modified to phosphoserine: Ser1033 and Ser1050.

This sequence belongs to the protein kinase superfamily. Ser/Thr protein kinase family. BUB1 subfamily. Interacts with CENPE. Interacts with PLK1. Part of a complex containing BUB3, CDC20 and BUB1B. Interacts with anaphase-promoting complex/cyclosome (APC/C). Interacts with KNL1. Interacts with KAT2B. Interacts with RIPK3. Interacts with the closed conformation form of MAD2L1. Interacts with CDC20. Proteolytically cleaved by caspase-3 in a cell cycle specific manner. The cleavage might be involved in the durability of the cell cycle delay. In terms of processing, acetylation at Lys-243 regulates its degradation and timing in anaphase entry. Post-translationally, ubiquitinated. Degraded by the proteasome. Ubiquitinated by UBR5, promoting disassembly of the mitotic checkpoint complex from the APC/C complex. Sumoylated with SUMO2 and SUMO3. The sumoylation mediates the association with CENPE at the kinetochore. In terms of processing, autophosphorylated in vitro. Intramolecular autophosphorylation stimulated by CENPE. Phosphorylated during mitosis and hyperphosphorylated in mitotically arrested cells. Phosphorylation at Ser-659 and Ser-1033 occurs at kinetochores upon mitotic entry with dephosphorylation at the onset of anaphase. Post-translationally, proteolytically cleaved by caspase-3 in a cell cycle specific manner. The cleavage might be involved in the durability of the cell cycle delay. Caspase-3 cleavage is associated with abrogation of the mitotic checkpoint. The major site of cleavage is at Asp-603. In terms of tissue distribution, highly expressed in thymus followed by spleen.

It is found in the cytoplasm. The protein localises to the nucleus. Its subcellular location is the chromosome. It localises to the centromere. The protein resides in the kinetochore. The enzyme catalyses L-seryl-[protein] + ATP = O-phospho-L-seryl-[protein] + ADP + H(+). The catalysed reaction is L-threonyl-[protein] + ATP = O-phospho-L-threonyl-[protein] + ADP + H(+). Kinase activity stimulated by CENPE. Essential component of the mitotic checkpoint. Required for normal mitosis progression and tumor suppression. The mitotic checkpoint delays anaphase until all chromosomes are properly attached to the mitotic spindle. One of its checkpoint functions is to inhibit the activity of the anaphase-promoting complex/cyclosome (APC/C) by blocking the binding of CDC20 to APC/C, independently of its kinase activity. The other is to monitor kinetochore activities that depend on the kinetochore motor CENPE. Required for kinetochore localization of CENPE. Negatively regulates PLK1 activity in interphase cells and suppresses centrosome amplification. Also implicated in triggering apoptosis in polyploid cells that exit aberrantly from mitotic arrest. Essential for tumor suppression. May play a role in regulating aging and fertility. The protein is Mitotic checkpoint serine/threonine-protein kinase BUB1 beta (Bub1b) of Mus musculus (Mouse).